We begin with the raw amino-acid sequence, 463 residues long: Sugar transporter ERD6-like 7 (463 aa).

12 helical membrane-spanning segments follow: residues 26–46, 69–89, 103–123, 126–146, 157–177, 181–201, 264–284, 299–319, 327–347, 357–377, 396–416, and 426–446; these read WMVY…GSCA, LFGS…GPIA, AFCV…ALDL, LATG…IAEI, TLNQ…GTLV, VLAL…FFIP, VLIA…GICF, LGMI…APIV, LLLV…VSFY, AVPV…SAGM, VAGG…SYTF, and GTFL…IAIV.

Belongs to the major facilitator superfamily. Sugar transporter (TC 2.A.1.1) family.

The protein localises to the membrane. Its function is as follows. Sugar transporter. This is Sugar transporter ERD6-like 7 from Arabidopsis thaliana (Mouse-ear cress).